A 100-amino-acid chain; its full sequence is Nucleoid-associated protein Rcas_2292 (100 aa).

Belongs to the YbaB/EbfC family. As to quaternary structure, homodimer.

It is found in the cytoplasm. The protein resides in the nucleoid. Binds to DNA and alters its conformation. May be involved in regulation of gene expression, nucleoid organization and DNA protection. In Roseiflexus castenholzii (strain DSM 13941 / HLO8), this protein is Nucleoid-associated protein Rcas_2292.